The chain runs to 102 residues: MRMLVFFDLPVVSKADRRAYTVFRRFLLNDGYDMIQFSVYGRILNGTDAAQKHMQRLLANLPSEGSVRVLTVTEKQFASMKLLVGLPLFQEKKVNAAQIALF.

D8 serves as a coordination point for Mg(2+).

Belongs to the CRISPR-associated endoribonuclease Cas2 protein family. In terms of assembly, homodimer, forms a heterotetramer with a Cas1 homodimer. Mg(2+) is required as a cofactor.

Its function is as follows. CRISPR (clustered regularly interspaced short palindromic repeat), is an adaptive immune system that provides protection against mobile genetic elements (viruses, transposable elements and conjugative plasmids). CRISPR clusters contain sequences complementary to antecedent mobile elements and target invading nucleic acids. CRISPR clusters are transcribed and processed into CRISPR RNA (crRNA). Functions as a ssRNA-specific endoribonuclease. Involved in the integration of spacer DNA into the CRISPR cassette. In Acidovorax ebreus (strain TPSY) (Diaphorobacter sp. (strain TPSY)), this protein is CRISPR-associated endoribonuclease Cas2.